A 138-amino-acid polypeptide reads, in one-letter code: Acidic phospholipase A2 Drk-a1 (138 aa).

A signal peptide spans 1-16 (MRTLWIVAVCLIGVEG). 7 disulfides stabilise this stretch: cysteine 42-cysteine 131, cysteine 44-cysteine 60, cysteine 59-cysteine 111, cysteine 65-cysteine 138, cysteine 66-cysteine 104, cysteine 73-cysteine 97, and cysteine 91-cysteine 102. Positions 43, 45, and 47 each coordinate Ca(2+). Histidine 63 is a catalytic residue. Aspartate 64 contributes to the Ca(2+) binding site. Residue aspartate 105 is part of the active site.

The protein belongs to the phospholipase A2 family. Group II subfamily. D49 sub-subfamily. The cofactor is Ca(2+). Expressed by the venom gland.

Its subcellular location is the secreted. The catalysed reaction is a 1,2-diacyl-sn-glycero-3-phosphocholine + H2O = a 1-acyl-sn-glycero-3-phosphocholine + a fatty acid + H(+). In terms of biological role, snake venom phospholipase A2 (PLA2) that exhibits high hydrolytic activities and shows strong preference for the anionic micelles (dPPC with deoxycholate) to the zwitterionic micelles (dPPC with Triton X-100). PLA2 catalyzes the calcium-dependent hydrolysis of the 2-acyl groups in 3-sn-phosphoglycerides. The polypeptide is Acidic phospholipase A2 Drk-a1 (Daboia russelii (Russel's viper)).